Reading from the N-terminus, the 255-residue chain is Geranylgeranylglyceryl phosphate synthase (255 aa).

Residues Asp-26 and Ser-55 each coordinate Mg(2+). Sn-glycerol 1-phosphate contacts are provided by residues 174 to 180, 205 to 206, and 227 to 228; these read YLEAGSG, GG, and GT.

It belongs to the GGGP/HepGP synthase family. Group II subfamily. Mg(2+) is required as a cofactor.

It localises to the cytoplasm. It carries out the reaction sn-glycerol 1-phosphate + (2E,6E,10E)-geranylgeranyl diphosphate = sn-3-O-(geranylgeranyl)glycerol 1-phosphate + diphosphate. It functions in the pathway membrane lipid metabolism; glycerophospholipid metabolism. In terms of biological role, prenyltransferase that catalyzes the transfer of the geranylgeranyl moiety of geranylgeranyl diphosphate (GGPP) to the C3 hydroxyl of sn-glycerol-1-phosphate (G1P). This reaction is the first ether-bond-formation step in the biosynthesis of archaeal membrane lipids. The sequence is that of Geranylgeranylglyceryl phosphate synthase from Thermococcus sibiricus (strain DSM 12597 / MM 739).